We begin with the raw amino-acid sequence, 138 residues long: Basic phospholipase A2 ammodytoxin A (138 aa).

The first 16 residues, M1–G16, serve as a signal peptide directing secretion. 7 cysteine pairs are disulfide-bonded: C42–C131, C44–C60, C59–C111, C65–C138, C66–C104, C73–C97, and C91–C102. Y43, G45, and G47 together coordinate Ca(2+). Residue H63 is part of the active site. Residue D64 participates in Ca(2+) binding. D105 is an active-site residue.

It belongs to the phospholipase A2 family. Group II subfamily. D49 sub-subfamily. In terms of assembly, monomer. Binds to calmodulin, coagulation factor X (F10), M-type PLA2 receptor (R-180). May also bind to 14-3-3 proteins gamma (YWHAG) and epsilon (YWHAE), and R25, a mitochondrial membrane protein. Ca(2+) is required as a cofactor. Expressed by the venom gland.

It is found in the secreted. The protein localises to the host cytoplasm. Its subcellular location is the host cytosol. It catalyses the reaction a 1,2-diacyl-sn-glycero-3-phosphocholine + H2O = a 1-acyl-sn-glycero-3-phosphocholine + a fatty acid + H(+). Functionally, snake venom phospholipase A2 (PLA2) that acts as a presynaptic neurotoxin, an inhibitor of blood coagulation, and has been found to bind with high affinity to intracellular proteins. The response of indirectly stimulated neuromuscular preparations to ammodytoxin (Atx) is triphasic. The first phase, the transient inhibition of the acetylcholine (ACh) release, starts soon after the addition of Atx and lasts for several minutes. This phase is probably independent of Atx enzymatic activity. The effect may be due to the specific binding of the toxin to presynaptic receptors. These receptors, called N-type receptors, are still unidentified. It is noteworthy that a neuronal isoform of the M-type PLA2 receptor (R180) has been identified as a high-affinity receptor for Atx in neuronal plasma membranes. It was demonstrated however that this receptor is not essential for expression of neurotoxicity by Atx. The second phase corresponds to an augmentation of neurotransmitter release. A peak is reached 10-20 minutes after exposure of the preparation to Atx and is followed by a gradual reduction. In this phase, the enzymatic activity of Atx of the mammalian is not significant. It is speculated that the increased release of neurotransmitter in this phase is induced by the interference of Atx with voltage-gated potassium channels. Measurements of ionic currents showed however that voltage-gated potassium channels are not affected by Atx. The third phase of the response of neuromuscular preparations to Atx, which corresponds to a complete and irreversible paralysis, is clearly dependent on the hydrolytic activity of the toxin. In addition to its presynaptic neurotoxicity, Atx shows an anticoagulant activity by binding with high affinity to activated coagulation factor X (F10) thus inhibiting the formation of the prothrombinase complex (FX/FV) and its activity (IC(50) is 20 nM). Surprisingly, Atx was discovered to bind intracellular proteins such as calmodulin (CaM) (IC(50) is 6 nM), 14-3-3 proteins gamma (YWHAG) and epsilon (YWHAE) (by similarity with AtxC), as well as R25 (by similarity with AtxC), a mitochondrial integral membrane protein found in cerebral cortex. These findings raised a doubt about the dogma of the exclusively extracellular action of PLA2s, defended by the potential instability of these molecules in the reducing environment of the eukaryotic cytosol coupled with their possible inability to act as enzymes in this cellular compartment, due to too low concentration of calcium ions. This hypothesis was challenged efficiently by demonstrating the internalization of AtxA into a culture cells, but still remains to be directly demonstrated in vivo. PLA2 catalyzes the calcium-dependent hydrolysis of the 2-acyl groups in 3-sn-phosphoglycerides. This chain is Basic phospholipase A2 ammodytoxin A, found in Vipera ammodytes ammodytes (Western sand viper).